Here is a 576-residue protein sequence, read N- to C-terminus: Nuclear/nucleolar GTPase 2 (576 aa).

2 disordered regions span residues 1–61 (MVKK…SNEY) and 166–186 (QDAF…EEED). Positions 16–34 (HSLDANRADGKKKTTETRS) are enriched in basic and acidic residues. The span at 42-52 (KMYKTRPKRNA) shows a compositional bias: basic residues. Residues 206-367 (WGELYKVIDS…LIDCPGVVYQ (162 aa)) form the CP-type G domain. The DARXP motif motif lies at 224-228 (DARDP). The interval 254–257 (NKCD) is G4. A GTP-binding site is contributed by 254–257 (NKCD). Positions 283–285 (SVN) are G5. The G1 stretch occupies residues 316 to 323 (GYPNVGKS). 319 to 324 (NVGKSS) is a GTP binding site. Positions 342 to 346 (GETKV) are G2. The segment at 360 to 363 (DCPG) is G3. Gly363 contributes to the GTP binding site. Residues 502-576 (TQQQKDVPVQ…DEEDESDSAE (75 aa)) are disordered. Residues 509-530 (PVQRDFYDEKDLKDDKKAKEST) show a composition bias toward basic and acidic residues. The segment covering 531-576 (ETDAENGTDAEEDEDAVSEDGVESDSDADEDAVSENDEEDESDSAE) has biased composition (acidic residues).

This sequence belongs to the TRAFAC class YlqF/YawG GTPase family. RsgA subfamily. As to quaternary structure, interacts with the 60S ribosomal proteins RPL10AA, RPL10AB and RPL10AC. As to expression, ubiquitous, with higher levels in meristematic regions.

It localises to the nucleus. The protein localises to the nucleolus. Its activity is regulated as follows. The GTPase activity is stimulated in the presence of the 60S ribosomal subunit. In terms of biological role, GTPase involved in pre-60S ribosomal subunit maturation. The chain is Nuclear/nucleolar GTPase 2 from Arabidopsis thaliana (Mouse-ear cress).